The following is a 427-amino-acid chain: Citrate synthase (427 aa).

Position 283 is an N6-acetyllysine (lysine 283). Active-site residues include histidine 306 and aspartate 363.

The protein belongs to the citrate synthase family. Homohexamer.

It catalyses the reaction oxaloacetate + acetyl-CoA + H2O = citrate + CoA + H(+). It participates in carbohydrate metabolism; tricarboxylic acid cycle; isocitrate from oxaloacetate: step 1/2. This chain is Citrate synthase (gltA), found in Escherichia coli O6:H1 (strain CFT073 / ATCC 700928 / UPEC).